Reading from the N-terminus, the 294-residue chain is MQGPAGNASRGLPGGPPSTVASGAGRCESGALMHSFGIFLQGLLGVVAFSTLMLKRFREPKHERRPWRIWFLDTSKQAIGMLFIHFANVYLADLTEEDPCSLYLINFLLDATVGMLLIYVGVRAVSVLVEWQQWESLRFGEYGDPLQCGAWVGQCALYIVIMIFEKSVVFIVLLILQWKKVALLNPIENPDLKLAIVMLIVPFFVNALMFWVVDNFLMRKGKTKAKLEERGANQDSRNGSKVRYRRAASHEESESEILISADDEMEESDVEEDLRRLTPLKPVKKKKHRFGLPV.

Residues 1–22 (MQGPAGNASRGLPGGPPSTVAS) are disordered. Over 1-28 (MQGPAGNASRGLPGGPPSTVASGAGRCE) the chain is Cytoplasmic. Transmembrane regions (helical) follow at residues 29 to 49 (SGALMHSFGIFLQGLLGVVAF), 69 to 89 (IWFLDTSKQAIGMLFIHFANV), and 102 to 122 (LYLINFLLDATVGMLLIYVGV). A GXXXG motif motif is present at residues 149-153 (GAWVG). The next 2 membrane-spanning stretches (helical) occupy residues 156–176 (ALYIVIMIFEKSVVFIVLLIL) and 194–214 (LAIVMLIVPFFVNALMFWVVD). Over 215 to 294 (NFLMRKGKTK…KKKHRFGLPV (80 aa)) the chain is Cytoplasmic. The tract at residues 227–268 (LEERGANQDSRNGSKVRYRRAASHEESESEILISADDEMEES) is disordered. Positions 241-246 (KVRYRR) are required for localization in the endoplasmic reticulum.

It belongs to the STIMATE family. In terms of assembly, homooligomer. Interacts with STIM1. As to expression, widely expressed.

It is found in the endoplasmic reticulum membrane. Acts as a regulator of store-operated Ca(2+) entry (SOCE) at junctional sites that connect the endoplasmic reticulum (ER) and plasma membrane (PM), called ER-plasma membrane (ER-PM) junction or cortical ER. SOCE is a Ca(2+) influx following depletion of intracellular Ca(2+) stores. Acts by interacting with STIM1, promoting STIM1 conformational switch. Involved in STIM1 relocalization to ER-PM junctions. Contributes to the maintenance and reorganization of store-dependent ER-PM junctions. The chain is Store-operated calcium entry regulator STIMATE from Homo sapiens (Human).